We begin with the raw amino-acid sequence, 411 residues long: Prophage integrase IntR (411 aa).

The region spanning 81-176 is the Core-binding (CB) domain; the sequence is KTFGELCDIW…LLCSLLRFAY (96 aa). Positions 197-404 constitute a Tyr recombinase domain; it reads IKPDPLSKTE…IDDMNDEQIA (208 aa). Residues R231, K266, R358, and H381 contribute to the active site. The O-(3'-phospho-DNA)-tyrosine intermediate role is filled by Y391.

Belongs to the 'phage' integrase family.

Functionally, integrase is necessary for integration of the phage into the host genome by site-specific recombination. In conjunction with excisionase, integrase is also necessary for excision of the prophage from the host genome. In Escherichia coli (strain K12), this protein is Prophage integrase IntR (intR).